The primary structure comprises 245 residues: Pyridoxine 5'-phosphate synthase (245 aa).

Residue Asn7 coordinates 3-amino-2-oxopropyl phosphate. 9 to 10 contributes to the 1-deoxy-D-xylulose 5-phosphate binding site; sequence DH. Position 18 (Arg18) interacts with 3-amino-2-oxopropyl phosphate. His43 (proton acceptor) is an active-site residue. 1-deoxy-D-xylulose 5-phosphate is bound by residues Arg45 and His50. The Proton acceptor role is filled by Glu70. Position 100 (Thr100) interacts with 1-deoxy-D-xylulose 5-phosphate. The Proton donor role is filled by His190. 3-amino-2-oxopropyl phosphate is bound by residues Gly191 and 212–213; that span reads GH.

It belongs to the PNP synthase family. Homooctamer; tetramer of dimers.

The protein localises to the cytoplasm. The catalysed reaction is 3-amino-2-oxopropyl phosphate + 1-deoxy-D-xylulose 5-phosphate = pyridoxine 5'-phosphate + phosphate + 2 H2O + H(+). It functions in the pathway cofactor biosynthesis; pyridoxine 5'-phosphate biosynthesis; pyridoxine 5'-phosphate from D-erythrose 4-phosphate: step 5/5. Functionally, catalyzes the complicated ring closure reaction between the two acyclic compounds 1-deoxy-D-xylulose-5-phosphate (DXP) and 3-amino-2-oxopropyl phosphate (1-amino-acetone-3-phosphate or AAP) to form pyridoxine 5'-phosphate (PNP) and inorganic phosphate. This Prochlorococcus marinus (strain MIT 9313) protein is Pyridoxine 5'-phosphate synthase.